The following is a 149-amino-acid chain: MERTFLMIKPDAIQRNLVGEIISRIERKGLKLVGAKLMTVPQALAEEHYSEHTDKPFYGKLISFITSAPVFAMVVEGEDAVDVSRHIIGKTNPSEATPGSIRGDLGLTVGRNVIHGSDSVESAQREINLWFKEEELSSYEAPRDTWLYE.

ATP-binding residues include K9, F57, R85, T91, R102, and N112. The active-site Pros-phosphohistidine intermediate is the H115.

The protein belongs to the NDK family. Homotetramer. Mg(2+) serves as cofactor.

The protein localises to the cytoplasm. It catalyses the reaction a 2'-deoxyribonucleoside 5'-diphosphate + ATP = a 2'-deoxyribonucleoside 5'-triphosphate + ADP. The catalysed reaction is a ribonucleoside 5'-diphosphate + ATP = a ribonucleoside 5'-triphosphate + ADP. Functionally, major role in the synthesis of nucleoside triphosphates other than ATP. The ATP gamma phosphate is transferred to the NDP beta phosphate via a ping-pong mechanism, using a phosphorylated active-site intermediate. The sequence is that of Nucleoside diphosphate kinase from Staphylococcus haemolyticus (strain JCSC1435).